The following is a 538-amino-acid chain: Putative amidase kk1C (538 aa).

Residues 1–32 are disordered; the sequence is MTEPTWKTVASEKQQQRESKIPSEWQIPKSSH. Residues Lys134 and Ser209 each act as charge relay system in the active site. Ser233 functions as the Acyl-ester intermediate in the catalytic mechanism.

Belongs to the amidase family.

It carries out the reaction a monocarboxylic acid amide + H2O = a monocarboxylate + NH4(+). It functions in the pathway secondary metabolite biosynthesis. Its function is as follows. Putative amidase; part of the gene cluster that mediates the biosynthesis of KK-1, a novel cyclic depsipeptide with 10 residues which is a promising active compound with high activity against many plant pathogens, especially Botrytis cinerea. The role of kk1C in KK-1 biosynthesis has still to be determined. The nonribosomal peptide synthetase (NRPS) kk1B catalyzes the elongation and cyclization of the decapeptide chain composed of 1 D-lactic acid residue (D-Lac), 1 pipecolic acid residue (Pip), 1 aspartic acid residue (Asp), 1 isoleucine residue (Ile), 1 glycine residue (Gly), 1 tyrosine residue (Tyr) and 4 valine residues (Val). The Asp, Ile and 3 Val residues are N-methylated by the 5 methyltransferase domains from the NRPS (found in modules 3, 5, 6, 7 and 9), whereas the Tyr residue is O-methylated by the cluster encoded O-methyltransferase kk1A. The thioesterase kk1J is likely to be involved in the corrective mechanism of peptide chain synthesis. The D-lactate dehydrogenase kk1H is involved in the synthesis of D-lactic acid from pyruvic acid, which is recognized by the A domain of the first kk1B module. The pyrroline-5-carboxylate reductase kk1I is involved in the synthesis of the L-pipecolic acid residue of KK-1 from delta-1-pyrroline-5-carboxylate (P5C), a metabolic intermediate of lysine. It is still unclear how kk1C and kk1D are involved in the production of KK-1. In Curvularia clavata, this protein is Putative amidase kk1C.